A 1202-amino-acid polypeptide reads, in one-letter code: Liprin-alpha-1 (1202 aa).

The segment at 1–33 (MMCEVMPTISEAEGPPGGGGGHGSGSPSQPDAD) is disordered. Over residues 15-24 (PPGGGGGHGS) the composition is skewed to gly residues. Residues 34–141 (SHFEQLMVSM…VSRHERSLRM (108 aa)) adopt a coiled-coil conformation. A Phosphoserine modification is found at serine 150. Residues 176–214 (EKVRERLRVALERCSLLEEELGATHKELMILKEQNNQKK) are a coiled coil. Disordered stretches follow at residues 224-245 (NHEQ…SLSH) and 426-446 (KNQE…HNKR). Threonine 230 is subject to Phosphothreonine. Phosphoserine occurs at positions 239, 242, and 244. Coiled-coil stretches lie at residues 249–521 (LAKV…GASL) and 623–669 (ADAH…SGSL). Serine 448 is subject to Phosphoserine. Positions 651-662 (ENTEQRAEEIES) are enriched in basic and acidic residues. Positions 651–855 (ENTEQRAEEI…SKLGGQAEKN (205 aa)) are disordered. A phosphoserine mark is found at serine 666, serine 668, and serine 693. The span at 686 to 700 (ASSLASSSPPGSGRS) shows a compositional bias: low complexity. The span at 725 to 736 (SREEVRDDKTTI) shows a compositional bias: basic and acidic residues. A Phosphothreonine modification is found at threonine 761. A compositionally biased stretch (basic and acidic residues) spans 762-771 (VSHEDIRDIR). Position 763 is a phosphoserine (serine 763). Residues 832-841 (VSETDNSSQD) show a composition bias toward polar residues. Residues 847 to 871 (KLGGQAEKNRKLQKKHELLEEARRQ) adopt a coiled-coil conformation. 3 SAM domains span residues 878–944 (WDGP…IMSL), 963–1027 (NHEW…LRRL), and 1051–1120 (WSND…LLVM). A coiled-coil region spans residues 1021 to 1050 (IMCLRRLNYDRKELERKREESQSEIKDVLV). The residue at position 1133 (serine 1133) is a Phosphoserine. A Phosphothreonine modification is found at threonine 1159. Residues 1163–1202 (NFRVTSSMSSPSMQPKKMQMDGNVSGTQRLDSATVRTYSC) are disordered. Low complexity predominate over residues 1168-1179 (SSMSSPSMQPKK). Residues 1184-1202 (GNVSGTQRLDSATVRTYSC) show a composition bias toward polar residues.

It belongs to the liprin family. Liprin-alpha subfamily. In terms of assembly, homodimer. Interacts with PTPRF (via D2 domain). Part of a cortical microtubule stabilization complex (CMSC) composed of KANK1, PPFIA1, PPFIBP1, ERC1/ELKS, PHLDB2/LL5beta, CLASPs, KIF21A and possibly additional interactors; within CMSCs KANK1 and PHLDB2/LL5beta seem to be the core components for recruiting microtubule-binding proteins KIF21A and CLASPs, whereas PPFIA1, PPFIBP1 and ERC1/ELKS serve as scaffolds for protein clustering. As to expression, ubiquitous.

The protein localises to the cytoplasm. It localises to the cell cortex. Functionally, may regulate the disassembly of focal adhesions. May localize receptor-like tyrosine phosphatases type 2A at specific sites on the plasma membrane, possibly regulating their interaction with the extracellular environment and their association with substrates. The chain is Liprin-alpha-1 (PPFIA1) from Homo sapiens (Human).